A 222-amino-acid polypeptide reads, in one-letter code: Probable GTP-binding protein EngB (222 aa).

The EngB-type G domain maps to Thr-27 to Gly-202. GTP-binding positions include Gly-35–Ser-42, Gly-61–Leu-65, Asp-81–Gly-84, Thr-148–Asp-151, and Phe-181–Ser-183. Mg(2+) contacts are provided by Ser-42 and Thr-63.

Belongs to the TRAFAC class TrmE-Era-EngA-EngB-Septin-like GTPase superfamily. EngB GTPase family. The cofactor is Mg(2+).

Its function is as follows. Necessary for normal cell division and for the maintenance of normal septation. The polypeptide is Probable GTP-binding protein EngB (Pseudoalteromonas translucida (strain TAC 125)).